The chain runs to 556 residues: Zinc finger protein 18 (556 aa).

Positions 41–123 (RQLFRQFRYQ…TLVESLKGEP (83 aa)) constitute an SCAN box domain. The disordered stretch occupies residues 169–195 (QDLPLQNSSSATGELLSHGVKEESDME). The 74-residue stretch at 218–291 (ELGTAVLPPL…HLHGAEKMAR (74 aa)) folds into the KRAB domain. 5 consecutive C2H2-type zinc fingers follow at residues 415–437 (PTCRECGKTFYRNSQLVFHQRTH), 443–465 (FHCHICKKAFLRSSDFVKHQRTH), 471–493 (CKCDYCGKGFSDFSGLRHHEKIH), 499–521 (YKCPLCEKSFIQRSNFNRHQRVH), and 527–549 (YKCTHCGKQFSWSSSLDKHQRSH).

It belongs to the krueppel C2H2-type zinc-finger protein family.

It localises to the nucleus. Its function is as follows. May be involved in transcriptional regulation. The chain is Zinc finger protein 18 (Znf18) from Mus musculus (Mouse).